The following is a 757-amino-acid chain: DNA endonuclease RBBP8 (757 aa).

The interval 22–45 is essential for binding to the MRN complex and for RPA focus formation on DNA damage; sequence DLWTKLKEYHDKETQGLQVKVTKL. A coiled-coil region spans residues 35 to 84; that stretch reads TQGLQVKVTKLKKERILDAQRLEEFFTKNQQLREQQKVLHETIKVLEDRL. The segment at 45-160 is required for interaction with LMO4, probably by stabilizing the interaction through RPPB8 dimerization; it reads LKKERILDAQ…TDLESEEDVI (116 aa). Residues K62 and K115 each participate in a glycyl lysine isopeptide (Lys-Gly) (interchain with G-Cter in SUMO2) cross-link. Residues 117-138 adopt a coiled-coil conformation; that stretch reads ITELMNEKNTLQEENKKLSEQL. K193 is covalently cross-linked (Glycyl lysine isopeptide (Lys-Gly) (interchain with G-Cter in SUMO2)). S272 bears the Phosphoserine mark. A Phosphothreonine modification is found at T309. Phosphoserine occurs at positions 320, 321, and 343. Residues 348 to 375 form a disordered region; the sequence is GKKTHLKTVPLSNTSAPGPEKPRSKSED. Glycyl lysine isopeptide (Lys-Gly) (interchain with G-Cter in SUMO2) cross-links involve residues K354 and K372. A Phosphoserine modification is found at S373. Residues K390, K399, and K405 each participate in a glycyl lysine isopeptide (Lys-Gly) (interchain with G-Cter in SUMO2) cross-link. A compositionally biased stretch (polar residues) spans 407 to 417; sequence TSEPISEQGNI. The segment at 407–430 is disordered; it reads TSEPISEQGNIGHSKDTDRDKHVV. A compositionally biased stretch (basic and acidic residues) spans 419–429; it reads HSKDTDRDKHV. Residues K433 and K443 each participate in a glycyl lysine isopeptide (Lys-Gly) (interchain with G-Cter in SUMO2) cross-link. Residues 484 to 488 form a PXDLS motif region; sequence PLDLS. Residues 484–488 carry the PXDLS motif motif; it reads PLDLS. Residues 503–551 form a damage-recruitment motif region; the sequence is CENSKIRFRQVTLYEALKPIPRDSSSSRKALSGSCGLTKDSPEEPCLQE. K520 is covalently cross-linked (Glycyl lysine isopeptide (Lys-Gly) (interchain with G-Cter in SUMO2); alternate). Residues 524-544 form a disordered region; it reads RDSSSSRKALSGSCGLTKDSP. Glycyl lysine isopeptide (Lys-Gly) (interchain with G-Cter in SUMO2) cross-links involve residues K564 and K570. K596 is covalently cross-linked (Glycyl lysine isopeptide (Lys-Gly) (interchain with G-Cter in SUMO2); alternate). Glycyl lysine isopeptide (Lys-Gly) (interchain with G-Cter in SUMO2) cross-links involve residues K605, K630, and K632. Positions 633-677 are required for interaction with LMO4, probably by making physical contact with LMO4; that stretch reads SLQNNQDVSFENIQWSIDPGADLSQYKMGVTVDDTKDGSQSRLAG. The residue at position 656 (S656) is a Phosphoserine; by ATM. K668 participates in a covalent cross-link: Glycyl lysine isopeptide (Lys-Gly) (interchain with G-Cter in SUMO2). The residue at position 671 (S671) is a Phosphoserine. The span at 696 to 728 shows a compositional bias: basic and acidic residues; the sequence is KKQEQKGEESPNGERKMNDSLEDMFDRTTHEEY. The interval 696–757 is disordered; it reads KKQEQKGEES…TTTKKPNISW (62 aa). A Glycyl lysine isopeptide (Lys-Gly) (interchain with G-Cter in SUMO2) cross-link involves residue K711. Residue S715 is modified to Phosphoserine. The segment covering 747–757 has biased composition (polar residues); the sequence is STTTKKPNISW.

Belongs to the COM1/SAE2/CtIP family. Homotetramer; formed by antiparallel association of helical extensions protruding from the N-termini of two parallel coiled-coil dimers. Forms a dumbbell-shaped particle in which polar globular domains are held about 30 nm apart by a central rod. Homotetramerization is required for DNA-end resection and repair. Interacts (via the PXDLS motif) with CTBP1; the interaction is disrupted via binding of the adenovirus E1A to CTBP1. Component of the BRCA1-RBBP8 complex. Interacts (the Ser-321 phosphorylated form) with BRCA1 (via the C-terminal BRCT domains): the interaction occurs in the G2 phase, ubiquitinates RBBP8 and involves RBBP8 in BRCA1-dependent G2/M checkpoint control on DNA damage. Interacts with RB1. Interacts with the MRN complex. Interacts directly with MRE11; the interaction is required for efficient homologous recombination (HR) and regulation of the MRN complex. Interacts directly with RAD50. Interacts (when phosphorylated by CDK1) with NBN; promoting association with the MRN complex. Interacts with LMO4 (via the LIM zinc-binding 1 domain). Interacts with SIAH1. Interacts with RNF138. Interacts with EXD2. Interacts with CUL3 and KLHL15; this interaction leads to RBBP8 proteasomal degradation. Directly interacts with PIN1; this interaction depends upon RBBP8 phosphorylation, predominantly at Thr-309. Interacts with FZR1; this interaction leads to APC/C-mediated RBBP8 proteasomal degradation. Interacts with AUNIP; leading to recruit RBBP8 to sites of DNA damage. Interacts with SAMHD1. Interacts with HDGFL2. Post-translationally, hyperphosphorylation upon ionizing radiation results in dissociation from BRCA1. Phosphorylation by CDK1 is essential for the recruitment to DNA and the DNA repair function. Phosphorylated on Ser-321 as cells enter G2 phase. This phosphorylation is required for binding BRCA1 and for the G2/M DNA damage transition checkpoint control. Phosphorylation at Thr-309, probably catalyzed by CDK2, is required for PIN1-binding, while phosphorylation at Ser-272 serves as a PIN1 isomerization site. Phosphorylation at Thr-309 is cell-cycle dependent. It steadily increases during S phase, peaks at late S/G2 phase, and drops at G1. Phosphorylation is not required for tetramerization. Binds to DNA more strongly when dephosphorylated. Ubiquitinated. Ubiquitination at multiple sites by BRCA1 (via its N-terminal RING domain) does not lead to its proteasomal degradation but instead the ubiquitinated RBBP8 binds to chromatin following DNA damage and may play a role in G2/M checkpoint control. Ubiquitinated by RNF138 at its N-terminus. Ubiquitinated through 'Lys-48' by the E3 CUL3-KLHL15 complex; this modification leads to proteasomal degradation. Ubiquitinated by the E3 FZR1/APC/C complex; this modification leads to proteasomal degradation.

The protein resides in the nucleus. It is found in the chromosome. Functionally, endonuclease that cooperates with the MRE11-RAD50-NBN (MRN) complex in DNA-end resection, the first step of double-strand break (DSB) repair through the homologous recombination (HR) pathway. HR is restricted to S and G2 phases of the cell cycle and preferentially repairs DSBs resulting from replication fork collapse. Key determinant of DSB repair pathway choice, as it commits cells to HR by preventing classical non-homologous end-joining (NHEJ). Specifically promotes the endonuclease activity of the MRN complex to clear DNA ends containing protein adducts: recruited to DSBs by NBN following phosphorylation by CDK1, and promotes the endonuclease activity of MRE11 to clear protein-DNA adducts and generate clean double-strand break ends. Functions downstream of the MRN complex and ATM, promotes ATR activation and its recruitment to DSBs in the S/G2 phase facilitating the generation of ssDNA. Component of the BRCA1-RBBP8 complex that regulates CHEK1 activation and controls cell cycle G2/M checkpoints on DNA damage. During immunoglobulin heavy chain class-switch recombination, promotes microhomology-mediated alternative end joining (A-NHEJ) and plays an essential role in chromosomal translocations. Binds preferentially to DNA Y-junctions and to DNA substrates with blocked ends and promotes intermolecular DNA bridging. This Bos taurus (Bovine) protein is DNA endonuclease RBBP8 (RBBP8).